A 1198-amino-acid chain; its full sequence is Structural polyprotein (1198 aa).

An interaction with host EXOC1 region spans residues 2-15; that stretch reads TKKPGGPGKNRAIN. The segment at 37-72 is hydrophobic; homodimerization of capsid protein C; that stretch reads LLDGRGPVRFVLALITFFKFTALAPTKALLGRWRAV. Residues 106 to 127 constitute a propeptide, ER anchor for the capsid protein C, removed in mature form by serine protease NS3; it reads GGNESSIMWLASLAIVIACAGA. Residues 110–130 traverse the membrane as a helical segment; that stretch reads SSIMWLASLAIVIACAGAMKL. N-linked (GlcNAc...) asparagine; by host glycosylation occurs at Asn-142. The next 2 helical transmembrane spans lie at 254-274 and 280-294; these read WIIR…MLGS and VVFT…PAYS. 6 cysteine pairs are disulfide-bonded: Cys-297–Cys-324, Cys-354–Cys-410, Cys-354–Cys-415, Cys-368–Cys-399, Cys-386–Cys-410, and Cys-386–Cys-415. The tract at residues 392 to 405 is fusion peptide; it reads DRGWGNGCGLFGKG. Asn-448 carries an N-linked (GlcNAc...) asparagine; by host glycan. 2 cysteine pairs are disulfide-bonded: Cys-484–Cys-581 and Cys-598–Cys-629. 2 helical membrane-spanning segments follow: residues 747–767 and 774–794; these read FGGM…WMGV and IALA…NVHA. Cystine bridges form between Cys-798/Cys-809, Cys-849/Cys-937, Cys-973/Cys-1017, Cys-1074/Cys-1123, Cys-1085/Cys-1106, and Cys-1107/Cys-1110. Asn-924 and Asn-1001 each carry an N-linked (GlcNAc...) asparagine; by host glycan. Residues 1151–1178 form a disordered region; that stretch reads MIDPFSAGPSGDVSGHPGGPSQEVDGQI.

As to quaternary structure, homodimer. Interacts (via N-terminus) with host EXOC1 (via C-terminus); this interaction results in EXOC1 degradation through the proteasome degradation pathway. Interacts with host CAPRIN1; this interaction is involved in the suppression of the integrated stress response. In terms of assembly, forms heterodimers with envelope protein E in the endoplasmic reticulum and Golgi. Homodimer; in the endoplasmic reticulum and Golgi. Interacts with protein prM. Interacts with non-structural protein 1. In terms of processing, genome polyprotein: Specific enzymatic cleavages in vivo yield mature proteins. Cleavages in the lumen of endoplasmic reticulum are performed by host signal peptidase, whereas cleavages in the cytoplasmic side are performed by serine protease NS3. Signal cleavage at the 2K-4B site requires a prior NS3 protease-mediated cleavage at the 4A-2K site. Post-translationally, cleaved in post-Golgi vesicles by a host furin, releasing the mature small envelope protein M, and peptide pr. This cleavage is incomplete as up to 30% of viral particles still carry uncleaved prM. N-glycosylated.

The protein localises to the secreted. It is found in the virion membrane. The protein resides in the host endoplasmic reticulum membrane. Plays a role in virus budding by binding to the cell membrane and gathering the viral RNA into a nucleocapsid that forms the core of a mature virus particle. During virus entry, may induce genome penetration into the host cytoplasm after hemifusion induced by the surface proteins. Can migrate to the cell nucleus where it modulates host functions. Overcomes the anti-viral effects of host EXOC1 by sequestering and degrading the latter through the proteasome degradation pathway. Inhibits the integrated stress response (ISR) in the infected cell by binding to host CAPRIN1. In terms of biological role, inhibits RNA silencing by interfering with host Dicer. Its function is as follows. Prevents premature fusion activity of envelope proteins in trans-Golgi by binding to envelope protein E at pH6.0. After virion release in extracellular space, gets dissociated from E dimers. Functionally, acts as a chaperone for envelope protein E during intracellular virion assembly by masking and inactivating envelope protein E fusion peptide. prM is the only viral peptide matured by host furin in the trans-Golgi network probably to avoid catastrophic activation of the viral fusion activity in acidic Golgi compartment prior to virion release. prM-E cleavage is inefficient, and many virions are only partially matured. These uncleaved prM would play a role in immune evasion. May play a role in virus budding. Exerts cytotoxic effects by activating a mitochondrial apoptotic pathway through M ectodomain. May display a viroporin activity. In terms of biological role, binds to host cell surface receptor and mediates fusion between viral and cellular membranes. Envelope protein is synthesized in the endoplasmic reticulum in the form of heterodimer with protein prM. They play a role in virion budding in the ER, and the newly formed immature particle is covered with 60 spikes composed of heterodimer between precursor prM and envelope protein E. The virion is transported to the Golgi apparatus where the low pH causes dissociation of PrM-E heterodimers and formation of E homodimers. prM-E cleavage is inefficient, and many virions are only partially matured. These uncleaved prM would play a role in immune evasion. The protein is Structural polyprotein of Ardeidae (herons).